A 456-amino-acid chain; its full sequence is Cell adhesion molecule 1 (456 aa).

A signal peptide spans 1–47 (MASAVLPSGSQCAAAAAVAAAAAPPGLRLRLLLLLLSAAALIPTGDG). Residues 48-142 (QNLFTKDVTV…PPQESYTTIT (95 aa)) enclose the Ig-like V-type domain. The Extracellular segment spans residues 48 to 388 (QNLFTKDVTV…EEGTIGAVDH (341 aa)). A disulfide bridge connects residues Cys-67 and Cys-127. Residues Asn-70, Asn-104, Asn-116, and Asn-168 are each glycosylated (N-linked (GlcNAc...) asparagine). Ig-like C2-type domains follow at residues 147–241 (PRNL…RYLE) and 246–332 (PQVH…YMLY). Cystine bridges form between Cys-169–Cys-223 and Cys-270–Cys-316. N-linked (GlcNAc...) asparagine glycosylation is found at Asn-307 and Asn-311. The chain crosses the membrane as a helical span at residues 389–409 (AVIGGVVAVVVFAMLCLLIIL). The Cytoplasmic portion of the chain corresponds to 410–456 (GRYFARHKGTYFTHEAKGADDAADADTAIINAEGGQNNSEEKKEYFI). Thr-436 carries the phosphothreonine modification. At Ser-448 the chain carries Phosphoserine.

The protein belongs to the nectin family. As to quaternary structure, homodimer (via Ig-like V-type domain). Interacts with FARP1. Interacts (via Ig-like V-type domain) with CRTAM (via Ig-like V-type domain); the interaction competes with CRTAM homodimerization and CADM1 homodimerization. Interacts (via C-terminus) with EPB41L3/DAL1. The interaction with EPB41L3/DAL1 may act to anchor CADM1 to the actin cytoskeleton. Interacts (via C-terminus) with MPP2 (via PDZ domain). Interacts (via C-terminus) with MPP3 (via PDZ domain); this interaction connects CADM1 with DLG1. Interacts (via C-terminus) with PALS2 (via PDZ domain). In terms of processing, N-glycosylated. Post-translationally, glycosylation at Asn-70 and Asn-104 promotes adhesive binding and synapse induction. Expressed dominantly in epithelial cells but not expressed in fibroblast cells (at protein level). Expressed in the T-cell area of lymph nodes, specifically in CD8+ and CD4- CD8- dendritic cells (at protein level). Expressed in CD8+ dendritic cells in the spleen (at protein level). Expressed in CD103+ dendritic cells in the small intestine lamina propria and mesenteric lymph nodes (at protein level). Expressed in brain, lung, kidney, testis, heart, spleen and liver, but not expressed in skeletal muscle.

The protein localises to the cell membrane. It is found in the synaptic cell membrane. Mediates homophilic cell-cell adhesion in a Ca(2+)-independent manner. Also mediates heterophilic cell-cell adhesion with CADM3 and NECTIN3 in a Ca(2+)-independent manner. Interaction with CRTAM promotes natural killer (NK) cell cytotoxicity and interferon-gamma (IFN-gamma) secretion by CD8+ T-cells in vitro as well as NK cell-mediated rejection of tumors expressing CADM1 in vivo. In mast cells, may mediate attachment to and promote communication with nerves. CADM1, together with MITF, is essential for development and survival of mast cells in vivo. By interacting with CRTAM and thus promoting the adhesion between CD8+ T-cells and CD8+ dendritic cells, regulates the retention of activated CD8+ T-cell within the draining lymph node. Required for the intestinal retention of intraepithelial CD4+ CD8+ T-cells and, to a lesser extent, intraepithelial and lamina propria CD8+ T-cells and CD4+ T-cells. Interaction with CRTAM promotes the adhesion to gut-associated CD103+ dendritic cells, which may facilitate the expression of gut-homing and adhesion molecules on T-cells and the conversion of CD4+ T-cells into CD4+ CD8+ T-cells. Acts as a synaptic cell adhesion molecule and plays a role in the formation of dendritic spines and in synapse assembly. May be involved in neuronal migration, axon growth, pathfinding, and fasciculation on the axons of differentiating neurons. May play diverse roles in the spermatogenesis including in the adhesion of spermatocytes and spermatids to Sertoli cells and for their normal differentiation into mature spermatozoa. In Mus musculus (Mouse), this protein is Cell adhesion molecule 1.